A 427-amino-acid polypeptide reads, in one-letter code: Histidinol dehydrogenase (427 aa).

NAD(+) is bound by residues Tyr-127, Gln-185, and Asn-208. Residues Ser-232, Gln-254, and His-257 each coordinate substrate. Residues Gln-254 and His-257 each coordinate Zn(2+). Residues Glu-321 and His-322 each act as proton acceptor in the active site. Residues His-322, Asp-355, Glu-409, and His-414 each contribute to the substrate site. A Zn(2+)-binding site is contributed by Asp-355. His-414 lines the Zn(2+) pocket.

It belongs to the histidinol dehydrogenase family. Zn(2+) is required as a cofactor.

The catalysed reaction is L-histidinol + 2 NAD(+) + H2O = L-histidine + 2 NADH + 3 H(+). It participates in amino-acid biosynthesis; L-histidine biosynthesis; L-histidine from 5-phospho-alpha-D-ribose 1-diphosphate: step 9/9. Functionally, catalyzes the sequential NAD-dependent oxidations of L-histidinol to L-histidinaldehyde and then to L-histidine. In Haemophilus influenzae (strain 86-028NP), this protein is Histidinol dehydrogenase.